An 89-amino-acid chain; its full sequence is Large ribosomal subunit protein bL27 (89 aa).

The tract at residues 1–26 is disordered; the sequence is MAQKKAGGSSRNGRDSVGQRRGVKRF.

Belongs to the bacterial ribosomal protein bL27 family.

This is Large ribosomal subunit protein bL27 from Desulfovibrio desulfuricans (strain ATCC 27774 / DSM 6949 / MB).